Consider the following 129-residue polypeptide: Prefoldin subunit alpha (129 aa).

The protein belongs to the prefoldin alpha subunit family. As to quaternary structure, heterohexamer of two alpha and four beta subunits.

The protein resides in the cytoplasm. Its function is as follows. Molecular chaperone capable of stabilizing a range of proteins. Seems to fulfill an ATP-independent, HSP70-like function in archaeal de novo protein folding. In Thermofilum pendens (strain DSM 2475 / Hrk 5), this protein is Prefoldin subunit alpha.